The chain runs to 292 residues: tRNA(Ile)-lysidine synthase (292 aa).

32-37 (SGGADS) is a binding site for ATP.

This sequence belongs to the tRNA(Ile)-lysidine synthase family.

It localises to the cytoplasm. The enzyme catalyses cytidine(34) in tRNA(Ile2) + L-lysine + ATP = lysidine(34) in tRNA(Ile2) + AMP + diphosphate + H(+). In terms of biological role, ligates lysine onto the cytidine present at position 34 of the AUA codon-specific tRNA(Ile) that contains the anticodon CAU, in an ATP-dependent manner. Cytidine is converted to lysidine, thus changing the amino acid specificity of the tRNA from methionine to isoleucine. The chain is tRNA(Ile)-lysidine synthase from Corynebacterium diphtheriae (strain ATCC 700971 / NCTC 13129 / Biotype gravis).